The following is a 747-amino-acid chain: Meprin A subunit alpha (747 aa).

Residues 1-20 form the signal peptide; sequence MLWIQPACLLSLIFSAHIAA. A propeptide spanning residues 21–64 is cleaved from the precursor; that stretch reads VSIKHLLNGSDHDTDVGEQKDIFEINLAAGLNLFQGDILLPRTR. 2 N-linked (GlcNAc...) asparagine glycosylation sites follow: Asn28 and Asn139. One can recognise a Peptidase M12A domain in the interval 65-259; it reads NAMRDPSSRW…IRLNRMYNCT (195 aa). The Extracellular portion of the chain corresponds to 65–713; sequence NAMRDPSSRW…FYAGERCQAM (649 aa). Disulfide bonds link Cys106–Cys258, Cys127–Cys146, and Cys268–Cys430. Zn(2+) is bound at residue His154. Glu155 is an active-site residue. Residues His158 and His164 each contribute to the Zn(2+) site. N-linked (GlcNAc...) asparagine glycans are attached at residues Asn221, Asn257, Asn317, Asn413, Asn439, Asn533, and Asn540. The MAM domain maps to 263–432; it reads TLLDHCDFEK…ITLTETPCPA (170 aa). The MATH domain occupies 433-594; it reads GVWTIRNISQ…GDSLIIFVDF (162 aa). Residues 638-663 are disordered; sequence ESLPSSLGQRHPSRQKRSVENTGPME. The EGF-like domain maps to 671-711; the sequence is FRDPCDPNPCQNEGTCVNVKGMASCRCVSGHAFFYAGERCQ. Disulfide bonds link Cys675–Cys686, Cys680–Cys695, and Cys697–Cys710. Residues 714–741 traverse the membrane as a helical segment; it reads HVHGSLLGLLIGCIAGLIFLTFVTFSTT. The Cytoplasmic segment spans residues 742 to 747; sequence NGKLRQ.

As to quaternary structure, homotetramer consisting of disulfide-linked alpha subunits, homooligomer consisting of disulfide-linked alpha subunit homodimers, or heterotetramer of two alpha and two beta subunits formed by non-covalent association of two disulfide-linked heterodimers. Genetic factors determine which oligomer(s) will be formed (strain-specific). Interacts with MBL2 through its carbohydrate moiety. This interaction may inhibit its catalytic activity. Requires Zn(2+) as cofactor. N-glycosylated; contains GlcNAc, galactose, mannose and a small amount of fucose. Kidney, intestinal brush borders and salivary ducts.

It is found in the membrane. It carries out the reaction Hydrolysis of protein and peptide substrates preferentially on carboxyl side of hydrophobic residues.. With respect to regulation, inhibited by metal ion chelators EDTA and 1,10-phenanthroline, bradykinin analogs, cysteine, CONA65, and several hydroxamate compounds, particularly tyrosine hydroxamate. Not inhibited by 3,4-dichloroisocourmarin, soybean trypsin inhibitor, or the cysteine proteinase inhibitors iodoacetic acid and E-64. The sequence is that of Meprin A subunit alpha (Mep1a) from Mus musculus (Mouse).